We begin with the raw amino-acid sequence, 156 residues long: Small ribosomal subunit protein uS7 (156 aa).

It belongs to the universal ribosomal protein uS7 family. As to quaternary structure, part of the 30S ribosomal subunit. Contacts proteins S9 and S11.

In terms of biological role, one of the primary rRNA binding proteins, it binds directly to 16S rRNA where it nucleates assembly of the head domain of the 30S subunit. Is located at the subunit interface close to the decoding center, probably blocks exit of the E-site tRNA. This chain is Small ribosomal subunit protein uS7, found in Frankia alni (strain DSM 45986 / CECT 9034 / ACN14a).